The chain runs to 4114 residues: Ferrichrome siderophore peptide synthetase (4114 aa).

4 consecutive Carrier domains span residues 797 to 874, 1947 to 2021, 3020 to 3093, and 3574 to 3650; these read DPAT…QSSG, TDSE…IDKL, TQSE…MQSS, and QALS…SQTN. 4 positions are modified to O-(pantetheine 4'-phosphoryl)serine: serine 835, serine 1982, serine 3054, and serine 3611. Residues 4040-4061 form a disordered region; the sequence is LDYSHHSQHSTHDRTPPSTPHV. Residues 4041–4054 show a composition bias toward basic and acidic residues; that stretch reads DYSHHSQHSTHDRT.

The protein belongs to the ATP-dependent AMP-binding enzyme family. The cofactor is pantetheine 4'-phosphate.

The protein operates within siderophore biosynthesis; ferrichrome biosynthesis. Multidomain peptide synthetase involved in ferrichrome biosynthesis. The sequence is that of Ferrichrome siderophore peptide synthetase (SID2) from Mycosarcoma maydis (Corn smut fungus).